Consider the following 156-residue polypeptide: Arginine repressor (156 aa).

The protein belongs to the ArgR family.

Its subcellular location is the cytoplasm. Its pathway is amino-acid biosynthesis; L-arginine biosynthesis [regulation]. Its function is as follows. Regulates arginine biosynthesis genes. This chain is Arginine repressor, found in Shewanella halifaxensis (strain HAW-EB4).